The primary structure comprises 394 residues: Na(+)/H(+) antiporter NhaA (394 aa).

A run of 11 helical transmembrane segments spans residues 14-34 (AGGL…NSAL), 59-79 (LLLW…GLEV), 95-115 (VFPA…YLLF), 125-145 (GWAI…ALLG), 154-174 (VFLL…IALF), 179-199 (VSLQ…YMNW), 213-233 (LVLW…GVIV), 254-274 (GLHP…NAGV), 292-312 (IATG…WLAV), 328-348 (IFAV…IASL), and 363-383 (LGIL…LRLV).

This sequence belongs to the NhaA Na(+)/H(+) (TC 2.A.33) antiporter family.

It is found in the cell inner membrane. The enzyme catalyses Na(+)(in) + 2 H(+)(out) = Na(+)(out) + 2 H(+)(in). Na(+)/H(+) antiporter that extrudes sodium in exchange for external protons. This chain is Na(+)/H(+) antiporter NhaA, found in Yersinia pseudotuberculosis serotype IB (strain PB1/+).